The following is a 57-amino-acid chain: Large ribosomal subunit protein bL32 (57 aa).

Residues 1–19 show a composition bias toward basic residues; sequence MATPKFKKSRANTHSRRSQ. The disordered stretch occupies residues 1-20; sequence MATPKFKKSRANTHSRRSQW.

It belongs to the bacterial ribosomal protein bL32 family.

This Corynebacterium aurimucosum (strain ATCC 700975 / DSM 44827 / CIP 107346 / CN-1) (Corynebacterium nigricans) protein is Large ribosomal subunit protein bL32.